A 236-amino-acid chain; its full sequence is Probable transcriptional regulatory protein FP0835 (236 aa).

This sequence belongs to the TACO1 family.

It localises to the cytoplasm. The sequence is that of Probable transcriptional regulatory protein FP0835 from Flavobacterium psychrophilum (strain ATCC 49511 / DSM 21280 / CIP 103535 / JIP02/86).